The primary structure comprises 303 residues: Coenzyme PQQ synthesis protein B (303 aa).

This sequence belongs to the PqqB family.

The protein operates within cofactor biosynthesis; pyrroloquinoline quinone biosynthesis. Its function is as follows. May be involved in the transport of PQQ or its precursor to the periplasm. This chain is Coenzyme PQQ synthesis protein B, found in Acinetobacter baumannii (strain AYE).